A 263-amino-acid chain; its full sequence is MATAVAEELLLAEERMLAALAYLQCAVGCAVLARNRETNLAYGRHASPSFRVRVPARAAWVVQELPSLALPLYQYASESAPRLRSAPNCILLAMFLVHYGHRCLIYPFLMRGGKPMPLLACTMAIMFCTFNGYLQSRYLSHWAVYADDWVTDPRFLIGFGLWLAGMLINIHSDHILRNLRKPGDTGYKIPRGGLFEYVTAANYFGEIMEWCGYALASWSVQGAAFAFFTFCFLSGRAKEHHRWYLQKFEEYPKFRKILIPFLF.

5 consecutive transmembrane segments (helical) span residues 16–33, 90–110, 115–135, 155–175, and 213–233; these read MLAALAYLQCAVGCAVLA, ILLAMFLVHYGHRCLIYPFLM, PMPLLACTMAIMFCTFNGYLQ, FLIGFGLWLAGMLINIHSDHI, and YALASWSVQGAAFAFFTFCFL.

Belongs to the steroid 5-alpha reductase family.

The protein resides in the microsome membrane. The protein localises to the endoplasmic reticulum membrane. The enzyme catalyses a 3-oxo-5alpha-steroid + NADP(+) = a 3-oxo-Delta(4)-steroid + NADPH + H(+). It carries out the reaction 5alpha-pregnane-3,20-dione + NADP(+) = progesterone + NADPH + H(+). The catalysed reaction is 17beta-hydroxy-5alpha-androstan-3-one + NADP(+) = testosterone + NADPH + H(+). It catalyses the reaction androst-4-ene-3,17-dione + NADPH + H(+) = 5alpha-androstan-3,17-dione + NADP(+). In terms of biological role, converts testosterone into 5-alpha-dihydrotestosterone and progesterone or corticosterone into their corresponding 5-alpha-3-oxosteroids. It plays a central role in sexual differentiation and androgen physiology. In Macaca fascicularis (Crab-eating macaque), this protein is 3-oxo-5-alpha-steroid 4-dehydrogenase 1 (SRD5A1).